Consider the following 504-residue polypeptide: Maturase K (504 aa).

It belongs to the intron maturase 2 family. MatK subfamily.

The protein resides in the plastid. It localises to the chloroplast. Functionally, usually encoded in the trnK tRNA gene intron. Probably assists in splicing its own and other chloroplast group II introns. The sequence is that of Maturase K from Turritis glabra (Tower mustard).